Reading from the N-terminus, the 89-residue chain is Small ribosomal subunit protein uS19 (89 aa).

It belongs to the universal ribosomal protein uS19 family.

Its function is as follows. Protein S19 forms a complex with S13 that binds strongly to the 16S ribosomal RNA. The polypeptide is Small ribosomal subunit protein uS19 (Bacteroides thetaiotaomicron (strain ATCC 29148 / DSM 2079 / JCM 5827 / CCUG 10774 / NCTC 10582 / VPI-5482 / E50)).